Here is a 395-residue protein sequence, read N- to C-terminus: Succinyl-diaminopimelate desuccinylase (395 aa).

H74 serves as a coordination point for Zn(2+). D76 is an active-site residue. Residue D107 participates in Zn(2+) binding. The active-site Proton acceptor is the E141. E142, E170, and H368 together coordinate Zn(2+).

This sequence belongs to the peptidase M20A family. DapE subfamily. In terms of assembly, homodimer. The cofactor is Zn(2+). Requires Co(2+) as cofactor.

It carries out the reaction N-succinyl-(2S,6S)-2,6-diaminopimelate + H2O = (2S,6S)-2,6-diaminopimelate + succinate. Its pathway is amino-acid biosynthesis; L-lysine biosynthesis via DAP pathway; LL-2,6-diaminopimelate from (S)-tetrahydrodipicolinate (succinylase route): step 3/3. Its function is as follows. Catalyzes the hydrolysis of N-succinyl-L,L-diaminopimelic acid (SDAP), forming succinate and LL-2,6-diaminopimelate (DAP), an intermediate involved in the bacterial biosynthesis of lysine and meso-diaminopimelic acid, an essential component of bacterial cell walls. The polypeptide is Succinyl-diaminopimelate desuccinylase (Brucella anthropi (strain ATCC 49188 / DSM 6882 / CCUG 24695 / JCM 21032 / LMG 3331 / NBRC 15819 / NCTC 12168 / Alc 37) (Ochrobactrum anthropi)).